A 330-amino-acid polypeptide reads, in one-letter code: Endo-1,4-beta-xylanase (330 aa).

One can recognise a GH10 domain in the interval 2–330; it reads CSSIPSLREV…KPAFWRVVNI (329 aa). The active-site Proton donor is the glutamate 133. Glutamate 240 (nucleophile) is an active-site residue.

This sequence belongs to the glycosyl hydrolase 10 (cellulase F) family. Cytoplasmic xylanase subfamily.

Its subcellular location is the cytoplasm. The enzyme catalyses Endohydrolysis of (1-&gt;4)-beta-D-xylosidic linkages in xylans.. It functions in the pathway glycan degradation; xylan degradation. This chain is Endo-1,4-beta-xylanase (xynA), found in Geobacillus stearothermophilus (Bacillus stearothermophilus).